Reading from the N-terminus, the 143-residue chain is Peptide methionine sulfoxide reductase MsrB (143 aa).

The MsrB domain occupies 16 to 139; sequence DAELRRRLTP…NSAALNFEAK (124 aa). Residues cysteine 55, cysteine 58, cysteine 104, and cysteine 107 each contribute to the Zn(2+) site. The Nucleophile role is filled by cysteine 128.

It belongs to the MsrB Met sulfoxide reductase family. Requires Zn(2+) as cofactor.

It catalyses the reaction L-methionyl-[protein] + [thioredoxin]-disulfide + H2O = L-methionyl-(R)-S-oxide-[protein] + [thioredoxin]-dithiol. The chain is Peptide methionine sulfoxide reductase MsrB from Burkholderia mallei (strain NCTC 10229).